The chain runs to 246 residues: Ribonuclease 3 (246 aa).

In terms of domain architecture, RNase III spans Phe18–Gly147. Glu60 contributes to the Mg(2+) binding site. The active site involves Asp64. Positions 133 and 136 each coordinate Mg(2+). Glu136 is an active-site residue. Positions Asp173–Thr242 constitute a DRBM domain.

Belongs to the ribonuclease III family. As to quaternary structure, homodimer. The cofactor is Mg(2+).

The protein resides in the cytoplasm. The enzyme catalyses Endonucleolytic cleavage to 5'-phosphomonoester.. Digests double-stranded RNA. Involved in the processing of primary rRNA transcript to yield the immediate precursors to the large and small rRNAs (23S and 16S). Processes some mRNAs, and tRNAs when they are encoded in the rRNA operon. Processes pre-crRNA and tracrRNA of type II CRISPR loci if present in the organism. The polypeptide is Ribonuclease 3 (Geobacillus sp. (strain WCH70)).